Consider the following 186-residue polypeptide: Elongation factor P (186 aa).

This sequence belongs to the elongation factor P family.

Its subcellular location is the cytoplasm. The protein operates within protein biosynthesis; polypeptide chain elongation. In terms of biological role, involved in peptide bond synthesis. Stimulates efficient translation and peptide-bond synthesis on native or reconstituted 70S ribosomes in vitro. Probably functions indirectly by altering the affinity of the ribosome for aminoacyl-tRNA, thus increasing their reactivity as acceptors for peptidyl transferase. The polypeptide is Elongation factor P (Shewanella halifaxensis (strain HAW-EB4)).